Reading from the N-terminus, the 558-residue chain is DEAD-box ATP-dependent RNA helicase 49 (558 aa).

The Q motif motif lies at 16–44; sequence FSELKPPLSEDIIEALDRSGFEVCTPVQA. The Helicase ATP-binding domain occupies 47–226; that stretch reads IPFLCSHKDV…KAGLRNAMEV (180 aa). ATP is bound at residue 60 to 67; sequence AATGSGKT. A DEAD box motif is present at residues 174 to 177; the sequence is DEAD. A Helicase C-terminal domain is found at 255–402; the sequence is QLVHLLIENK…ERKCSENASD (148 aa). The interval 506–558 is disordered; sequence KDKLQQEKRGKRKKSSKEAVDDSNKASRKRKLTGRQRQTIQTAQDEEEMNLRL. The span at 521-530 shows a compositional bias: basic and acidic residues; it reads SKEAVDDSNK. A compositionally biased stretch (acidic residues) spans 549 to 558; that stretch reads QDEEEMNLRL.

This sequence belongs to the DEAD box helicase family. DDX55/SPB4 subfamily.

The enzyme catalyses ATP + H2O = ADP + phosphate + H(+). This Arabidopsis thaliana (Mouse-ear cress) protein is DEAD-box ATP-dependent RNA helicase 49 (RH49).